The sequence spans 124 residues: Small ribosomal subunit protein uS12 (124 aa).

Asp89 bears the 3-methylthioaspartic acid mark.

The protein belongs to the universal ribosomal protein uS12 family. Part of the 30S ribosomal subunit. Contacts proteins S8 and S17. May interact with IF1 in the 30S initiation complex.

Functionally, with S4 and S5 plays an important role in translational accuracy. Interacts with and stabilizes bases of the 16S rRNA that are involved in tRNA selection in the A site and with the mRNA backbone. Located at the interface of the 30S and 50S subunits, it traverses the body of the 30S subunit contacting proteins on the other side and probably holding the rRNA structure together. The combined cluster of proteins S8, S12 and S17 appears to hold together the shoulder and platform of the 30S subunit. The chain is Small ribosomal subunit protein uS12 from Shewanella putrefaciens (strain CN-32 / ATCC BAA-453).